Reading from the N-terminus, the 693-residue chain is CREB-regulated transcription coactivator 2 (693 aa).

The segment covering 1-20 (MATSGANGPGSATASASNPR) has biased composition (polar residues). The segment at 1-30 (MATSGANGPGSATASASNPRKFSEKIALQK) is disordered. Position 2 is an N-acetylalanine (Ala-2). Arg-51 carries the post-translational modification Asymmetric dimethylarginine; by PRMT6. Ser-70, Ser-86, and Ser-90 each carry phosphoserine. Asymmetric dimethylarginine; by PRMT6 occurs at positions 99, 120, and 123. Position 136 is a phosphoserine (Ser-136). Residues Arg-161 and Arg-168 each carry the asymmetric dimethylarginine; by PRMT6 modification. At Thr-169 the chain carries Phosphothreonine. Ser-171 is modified (phosphoserine). Residues 174–188 (ALHTSVMNPSPQDTY) are compositionally biased toward polar residues. The interval 174–210 (ALHTSVMNPSPQDTYPSPAAPSVLPSRRGGCLDGETD) is disordered. Residues 209 to 215 (TDSKVPA) are required for interaction with COP1. A Glycyl lysine isopeptide (Lys-Gly) (interchain with G-Cter in SUMO2) cross-link involves residue Lys-234. Residues 271–287 (TGGSLPDLTNLHFPPPL) carry the Nuclear export signal motif. Disordered regions lie at residues 271–307 (TGGS…GSST), 335–463 (HSPL…SPTL), and 476–548 (KLPT…QSYH). Ser-274 is subject to Phosphoserine; by MARK2. At Ser-306 the chain carries Phosphoserine. Positions 339–351 (SHPSFQSSLSNPN) are enriched in polar residues. Low complexity-rich tracts occupy residues 352-378 (LQAS…SSLA) and 386-424 (SLGH…PGAS). Phosphoserine is present on residues Ser-368, Ser-393, Ser-433, and Ser-456. The span at 447-463 (SQQQLPKQFSPTMSPTL) shows a compositional bias: polar residues. Tyr-488 is subject to Phosphotyrosine. Phosphoserine occurs at positions 489 and 492. Thr-501 bears the Phosphothreonine mark. A phosphoserine mark is found at Ser-613 and Ser-624.

It belongs to the TORC family. In terms of assembly, binds, as a tetramer, through its N-terminal region, with the bZIP domain of CREB1. 'Arg-314' in the bZIP domain of CREB1 is essential for this interaction. Interaction, via its C-terminal, with TAF4, enhances recruitment of TAF4 to CREB1. Interacts with SIK2. Interacts with 14-3-3 proteins, YWHAB and YWHAG. Interacts (probably when phosphorylated at Ser-171) with YWHAE. Interacts with calmodulin-dependent catalytic subunit PPP3CA/calcineurin A. Interaction with COP1 mediates nuclear export and degradation of CRTC2. Post-translationally, phosphorylation/dephosphorylation states of Ser-171 are required for regulating transduction of CREB activity. CRTCs/TORCs are inactive when phosphorylated, and active when dephosphorylated at this site. This primary site of phosphorylation, is regulated by cAMP and calcium levels and is dependent on the phosphorylation of SIKs (SIK1 and SIK2) by LKB1. Following adenylyl cyclase activation, dephosphorylated at Ser-171 by PPP3CA/calcineurin A resulting in CRTC2 dissociation from 14-3-3 proteins and PPP3CA. Both insulin and AMPK increase this phosphorylation of CRTC2 while glucagon suppresses it. Phosphorylation at Ser-274 by MARK2 is induced under low glucose conditions and dephosphorylated in response to glucose influx. Phosphorylation at Ser-274 promotes interaction with 14-3-3 proteins and translocation to the cytoplasm. In terms of processing, asymmetric dimethylation of arginine resisues by PRMT6 enhances the association of CRTC2 with CREB on the promoters of gluconeogenic genes.

The protein localises to the cytoplasm. It is found in the nucleus. Transcriptional coactivator for CREB1 which activates transcription through both consensus and variant cAMP response element (CRE) sites. Acts as a coactivator, in the SIK/TORC signaling pathway, being active when dephosphorylated and acts independently of CREB1 'Ser-133' phosphorylation. Enhances the interaction of CREB1 with TAF4. Regulates gluconeogenesis as a component of the LKB1/AMPK/TORC2 signaling pathway. Regulates the expression of specific genes such as the steroidogenic gene, StAR. Potent coactivator of PPARGC1A and inducer of mitochondrial biogenesis in muscle cells. The chain is CREB-regulated transcription coactivator 2 (CRTC2) from Bos taurus (Bovine).